We begin with the raw amino-acid sequence, 159 residues long: SsrA-binding protein (159 aa).

It belongs to the SmpB family.

It localises to the cytoplasm. Functionally, required for rescue of stalled ribosomes mediated by trans-translation. Binds to transfer-messenger RNA (tmRNA), required for stable association of tmRNA with ribosomes. tmRNA and SmpB together mimic tRNA shape, replacing the anticodon stem-loop with SmpB. tmRNA is encoded by the ssrA gene; the 2 termini fold to resemble tRNA(Ala) and it encodes a 'tag peptide', a short internal open reading frame. During trans-translation Ala-aminoacylated tmRNA acts like a tRNA, entering the A-site of stalled ribosomes, displacing the stalled mRNA. The ribosome then switches to translate the ORF on the tmRNA; the nascent peptide is terminated with the 'tag peptide' encoded by the tmRNA and targeted for degradation. The ribosome is freed to recommence translation, which seems to be the essential function of trans-translation. The polypeptide is SsrA-binding protein (Coxiella burnetii (strain CbuK_Q154) (Coxiella burnetii (strain Q154))).